A 1574-amino-acid polypeptide reads, in one-letter code: Centrosomal protein of 170 kDa protein B (1574 aa).

Residues 23–73 (IFVGRDECELMLQSRSVDKQHAVINYDQDRDEHWVKDLGSLNGTFVNDVRI) enclose the FHA domain. Disordered regions lie at residues 121-258 (VSVK…GVGG), 316-395 (DWLV…RDPQ), and 409-578 (FDGD…QDQE). Basic and acidic residues-rich tracts occupy residues 147-157 (RPEKGDRRHGA), 182-197 (SEDR…RPKD), and 325-344 (LLRR…DLPV). At serine 360 the chain carries Phosphoserine. A compositionally biased stretch (low complexity) spans 370-382 (ASVSGASAEASGE). Serine 421 carries the post-translational modification Phosphoserine. Basic and acidic residues predominate over residues 430–446 (PKADKRRGPGTSDRDRP). Residues 452–463 (ATGSSSGPQRAS) show a composition bias toward polar residues. Over residues 465–474 (LKREKTEERL) the composition is skewed to basic and acidic residues. Residues 475-488 (GNTSPVPRASTRSF) show a composition bias toward polar residues. 2 positions are modified to phosphoserine: serine 478 and serine 490. A compositionally biased stretch (pro residues) spans 518–528 (EKTPPVLPAPL). Position 534 is a phosphoserine (serine 534). 2 positions are modified to phosphothreonine: threonine 540 and threonine 541. Serine 595, serine 617, serine 653, serine 709, serine 744, serine 746, serine 749, serine 751, serine 819, and serine 843 each carry phosphoserine. Disordered regions lie at residues 637-826 (PGMA…RDGL), 839-882 (RSGR…HISS), 924-1300 (SKSA…DPYG), 1333-1358 (AGDG…NTPA), 1377-1407 (NFQK…TNKT), and 1510-1535 (NRAP…TSPA). The segment covering 857 to 867 (FARQESFTKEP) has biased composition (polar residues). Residue serine 947 is modified to Phosphoserine. Over residues 950 to 959 (DTASTISLLS) the composition is skewed to polar residues. A phosphoserine mark is found at serine 965 and serine 981. Basic and acidic residues predominate over residues 996-1005 (ARERMSERQH). The segment covering 1084–1102 (RSSATAQKVQQALTRSNSL) has biased composition (polar residues). At serine 1122 the chain carries Phosphoserine. Residues 1134 to 1146 (AANPEPANRAAPE) are compositionally biased toward low complexity. Phosphoserine occurs at positions 1166 and 1186. The span at 1199–1213 (AEARAAAKKAAATAA) shows a compositional bias: low complexity. Polar residues predominate over residues 1265–1282 (HASTATQTPRGSSSTRAR). Threonine 1289 is modified (phosphothreonine). A Phosphoserine modification is found at serine 1341. Polar residues-rich tracts occupy residues 1344 to 1358 (PTRS…NTPA) and 1385 to 1396 (SMNSHNLDQNMN). The residue at position 1345 (threonine 1345) is a Phosphothreonine. Residue serine 1347 is modified to Phosphoserine. A phosphoserine mark is found at serine 1530 and serine 1533.

Belongs to the CEP170 family.

It is found in the cytoplasm. The protein localises to the cytoskeleton. Functionally, plays a role in microtubule organization. The chain is Centrosomal protein of 170 kDa protein B (Cep170b) from Mus musculus (Mouse).